The primary structure comprises 338 residues: Aspartate carbamoyltransferase catalytic subunit (338 aa).

2 residues coordinate carbamoyl phosphate: Arg57 and Thr58. Lys86 serves as a coordination point for L-aspartate. Carbamoyl phosphate contacts are provided by Arg107, His135, and Gln138. L-aspartate contacts are provided by Arg172 and Arg234. Positions 274 and 275 each coordinate carbamoyl phosphate.

It belongs to the aspartate/ornithine carbamoyltransferase superfamily. ATCase family. As to quaternary structure, heterododecamer (2C3:3R2) of six catalytic PyrB chains organized as two trimers (C3), and six regulatory PyrI chains organized as three dimers (R2).

It catalyses the reaction carbamoyl phosphate + L-aspartate = N-carbamoyl-L-aspartate + phosphate + H(+). Its pathway is pyrimidine metabolism; UMP biosynthesis via de novo pathway; (S)-dihydroorotate from bicarbonate: step 2/3. Catalyzes the condensation of carbamoyl phosphate and aspartate to form carbamoyl aspartate and inorganic phosphate, the committed step in the de novo pyrimidine nucleotide biosynthesis pathway. This chain is Aspartate carbamoyltransferase catalytic subunit, found in Cellvibrio japonicus (strain Ueda107) (Pseudomonas fluorescens subsp. cellulosa).